A 1375-amino-acid polypeptide reads, in one-letter code: DNA-directed RNA polymerase subunit beta' (1375 aa).

Residues 1-158 (MAKNEVLSLP…RVNKIIQPIR (158 aa)) form a unknown region. The interval 159–1353 (KTYGSKAFTH…GGLIPAGTGI (1195 aa)) is DNA-directed RNA polymerase subunit beta'. Residues Cys219, Cys221, Cys233, and Cys236 each contribute to the Zn(2+) site. Residues Asp607, Asp609, and Asp611 each coordinate Mg(2+).

Belongs to the RNA polymerase beta' chain family. The RNAP catalytic core consists of 2 alpha, 1 beta, 1 beta' and 1 omega subunit. When a sigma factor is associated with the core the holoenzyme is formed, which can initiate transcription. Mg(2+) serves as cofactor. Requires Zn(2+) as cofactor.

It carries out the reaction RNA(n) + a ribonucleoside 5'-triphosphate = RNA(n+1) + diphosphate. In terms of biological role, DNA-dependent RNA polymerase catalyzes the transcription of DNA into RNA using the four ribonucleoside triphosphates as substrates. The protein is DNA-directed RNA polymerase subunit beta' of Acholeplasma laidlawii (strain PG-8A).